We begin with the raw amino-acid sequence, 273 residues long: MATYLIGDVHGCYRELRQLLNQVNFDANQDTLWLTGDLVARGPDSLEVLRFVKSLGSALKLVLGNHDLHLLGVFAKISRNKPKDKLNELLNAPDADELINWLRRQPLLQVDEEKKIVMAHAGITPQWDLATAKKCAREVEAILSSDSYPLFINSMYGDMPNNWSPELTGLPRLRFSTNAFTRMRYCFPNGQLDMICKDKPENAPAPLKPWFDLPNQLPNDYSIIFGHWASLEGKGTPENIYALDTGCCWGGVLTCLRWEDKRYFIQPSLTHLP.

The protein belongs to the Ap4A hydrolase family.

The enzyme catalyses P(1),P(4)-bis(5'-adenosyl) tetraphosphate + H2O = 2 ADP + 2 H(+). Hydrolyzes diadenosine 5',5'''-P1,P4-tetraphosphate to yield ADP. This is Bis(5'-nucleosyl)-tetraphosphatase, symmetrical from Proteus mirabilis (strain HI4320).